Here is a 119-residue protein sequence, read N- to C-terminus: Non-specific lipid-transfer protein 12 (119 aa).

Positions M1 to S24 are cleaved as a signal peptide. 4 disulfides stabilise this stretch: C28-C75, C38-C52, C53-C98, and C73-C112.

It belongs to the plant LTP family.

Plant non-specific lipid-transfer proteins transfer phospholipids as well as galactolipids across membranes. May play a role in wax or cutin deposition in the cell walls of expanding epidermal cells and certain secretory tissues. The chain is Non-specific lipid-transfer protein 12 (LTP12) from Arabidopsis thaliana (Mouse-ear cress).